A 422-amino-acid chain; its full sequence is Tk-subtilisin (422 aa).

An N-terminal signal peptide occupies residues 1 to 24 (MKKSIALVLSIVLLAALFAVPASA). Residues 25 to 106 (GEQNTIRVIV…SWLGGGSTQP (82 aa)) constitute a propeptide that is removed on maturation. The Peptidase S8 domain occupies 111–417 (PWGIERVKAP…YGVVRAALAV (307 aa)). Catalysis depends on charge relay system residues D139, H177, and S348.

This sequence belongs to the peptidase S8 family. As to quaternary structure, monomer. It depends on Ca(2+) as a cofactor.

It is found in the secreted. In terms of biological role, has a broad substrate specificity with a slight preference to large hydrophobic amino acid residues at the P1 position. The sequence is that of Tk-subtilisin from Thermococcus kodakarensis (strain ATCC BAA-918 / JCM 12380 / KOD1) (Pyrococcus kodakaraensis (strain KOD1)).